The chain runs to 235 residues: uncharacterized protein (235 aa).

Disordered regions lie at residues 60-96 (SSNRSMSIDSLTGKKRPHDISFQNMNSSMPSSTQKKT) and 192-235 (LNTS…YDSF). Over residues 80–93 (SFQNMNSSMPSSTQ) the composition is skewed to polar residues. The segment covering 197–214 (SEDDTESIVETDYSEEEK) has biased composition (acidic residues).

The protein belongs to the asfivirus DP238L family.

This is an uncharacterized protein from Ornithodoros (relapsing fever ticks).